The sequence spans 332 residues: Glycerol-3-phosphate dehydrogenase [NAD(P)+] (332 aa).

Residues W11, R30, and K108 each contribute to the NADPH site. Sn-glycerol 3-phosphate is bound by residues K108, G137, and S139. A141 contributes to the NADPH binding site. Positions 192, 245, 255, 256, and 257 each coordinate sn-glycerol 3-phosphate. Catalysis depends on K192, which acts as the Proton acceptor. R256 is a binding site for NADPH. NADPH-binding residues include V280 and E282.

The protein belongs to the NAD-dependent glycerol-3-phosphate dehydrogenase family.

The protein localises to the cytoplasm. The enzyme catalyses sn-glycerol 3-phosphate + NAD(+) = dihydroxyacetone phosphate + NADH + H(+). It carries out the reaction sn-glycerol 3-phosphate + NADP(+) = dihydroxyacetone phosphate + NADPH + H(+). The protein operates within membrane lipid metabolism; glycerophospholipid metabolism. In terms of biological role, catalyzes the reduction of the glycolytic intermediate dihydroxyacetone phosphate (DHAP) to sn-glycerol 3-phosphate (G3P), the key precursor for phospholipid synthesis. In Burkholderia vietnamiensis (strain G4 / LMG 22486) (Burkholderia cepacia (strain R1808)), this protein is Glycerol-3-phosphate dehydrogenase [NAD(P)+].